Here is a 297-residue protein sequence, read N- to C-terminus: Large ribosomal subunit protein uL10 (297 aa).

It belongs to the universal ribosomal protein uL10 family. As to quaternary structure, part of the 50S ribosomal subunit. Forms part of the ribosomal stalk which helps the ribosome interact with GTP-bound translation factors. Forms a heptameric L10(L12)2(L12)2(L12)2 complex, where L10 forms an elongated spine to which the L12 dimers bind in a sequential fashion.

Forms part of the ribosomal stalk, playing a central role in the interaction of the ribosome with GTP-bound translation factors. The protein is Large ribosomal subunit protein uL10 of Methanococcus voltae.